Consider the following 182-residue polypeptide: Large ribosomal subunit protein uL22 (182 aa).

The tract at residues 159–182 (AAAKPKATAKKATGEKSKAKTKAN) is disordered.

The protein belongs to the universal ribosomal protein uL22 family. As to quaternary structure, part of the 50S ribosomal subunit.

Functionally, this protein binds specifically to 23S rRNA; its binding is stimulated by other ribosomal proteins, e.g. L4, L17, and L20. It is important during the early stages of 50S assembly. It makes multiple contacts with different domains of the 23S rRNA in the assembled 50S subunit and ribosome. In terms of biological role, the globular domain of the protein is located near the polypeptide exit tunnel on the outside of the subunit, while an extended beta-hairpin is found that lines the wall of the exit tunnel in the center of the 70S ribosome. The protein is Large ribosomal subunit protein uL22 of Cytophaga hutchinsonii (strain ATCC 33406 / DSM 1761 / CIP 103989 / NBRC 15051 / NCIMB 9469 / D465).